A 59-amino-acid polypeptide reads, in one-letter code: Toxin TxpA (59 aa).

Residues 7–27 (LMVMIGFANLIGGIMTWVISL) form a helical membrane-spanning segment.

The protein resides in the cell membrane. Its function is as follows. Toxic component of a type I toxin-antitoxin (TA) system. Overexpression of txpA causes cell lysis; the TxpA protein has been suggested to act on the cell membrane or might possibly block cell wall synthesis. Overexpression in E.coli is not toxic. The protein is Toxin TxpA of Bacillus subtilis (strain 168).